A 266-amino-acid polypeptide reads, in one-letter code: Mitochondrial genome maintenance protein MGM101 (266 aa).

The transit peptide at 1 to 23 (MLHSTKLVFRATPQALCFPVRSY) directs the protein to the mitochondrion. Composition is skewed to polar residues over residues 37–47 (KTTSKLAPSIT) and 57–68 (PSLQEPQSATST). The interval 37–68 (KTTSKLAPSITTEDEVAEQDPSLQEPQSATST) is disordered.

Belongs to the MGM101 family. As to quaternary structure, forms homooligomers in vitro.

Its subcellular location is the mitochondrion matrix. It is found in the mitochondrion nucleoid. Functionally, plays a role in the replication of the mitochondrial genome and the maintenance of its telomeres. Able to catalyze strand annealing and D-loop formation. Binds a wide variety of DNA substrates. Exhibited the highest affinity for DNA molecules carrying 3' ssDNA overhangs (Y-form, 3' FLAP, 3' overhang) and for substrates with complex structures (X-O and Fork). Forms homogeneous ring-shaped structures at the ssDNA native telomeres ends. Oligomers seem to bind to the ssDNA as a filament until they reach the double-stranded region and induce the formation of bends and loops within the double-stranded part of the molecules. This Candida parapsilosis (strain CDC 317 / ATCC MYA-4646) (Yeast) protein is Mitochondrial genome maintenance protein MGM101.